The primary structure comprises 352 residues: Small ribosomal subunit biogenesis GTPase RsgA (352 aa).

Over residues 1-11 (MTKRKLSKGQQ) the composition is skewed to basic residues. Residues 1–35 (MTKRKLSKGQQRRVQENHKKRLQSKEKKNHVELDD) form a disordered region. Residues 13–33 (RVQENHKKRLQSKEKKNHVEL) are compositionally biased toward basic and acidic residues. A CP-type G domain is found at 114–276 (YYDGIKPIAA…VIDSPGVREF (163 aa)). Residues 162 to 165 (NKVD) and 216 to 224 (GQSGVGKSS) contribute to the GTP site. Cysteine 300, cysteine 305, histidine 307, and cysteine 313 together coordinate Zn(2+).

Belongs to the TRAFAC class YlqF/YawG GTPase family. RsgA subfamily. As to quaternary structure, monomer. Associates with 30S ribosomal subunit, binds 16S rRNA. The cofactor is Zn(2+).

It is found in the cytoplasm. One of several proteins that assist in the late maturation steps of the functional core of the 30S ribosomal subunit. Helps release RbfA from mature subunits. May play a role in the assembly of ribosomal proteins into the subunit. Circularly permuted GTPase that catalyzes slow GTP hydrolysis, GTPase activity is stimulated by the 30S ribosomal subunit. In Proteus mirabilis (strain HI4320), this protein is Small ribosomal subunit biogenesis GTPase RsgA.